The following is a 790-amino-acid chain: PAN2-PAN3 deadenylation complex subunit PAN3 (790 aa).

Disordered regions lie at residues 166–191 and 235–259; these read IAQQ…AVSA and AMIS…ASPI. Residues 168–191 show a composition bias toward low complexity; it reads QQQPQHPQKQQQHPPSVGGGAVSA. The pseudokinase domain stretch occupies residues 369–655; sequence DAAEAAQHAL…SVTDLMPMIG (287 aa). ATP contacts are provided by residues Arg-423, 472–479, and 552–553; these read DYHPGSQT and TK. Residues 656-694 are a coiled coil; the sequence is ARFYTQLDALQSKIDMQEDELAKEMENGRLYRILVKLNS. The interval 695 to 790 is knob domain; sequence INERPDFNLD…FSELMSSAAN (96 aa).

Belongs to the protein kinase superfamily. PAN3 family. As to quaternary structure, homodimer. Forms a heterotrimer with a catalytic subunit PAN2 to form the poly(A)-nuclease (PAN) deadenylation complex. Interacts (via PAM-2 motif) with poly(A)-binding protein (via PABC domain), conferring substrate specificity of the enzyme complex. Interacts with the GW182 family protein gw. Interacts with Gyf.

It localises to the cytoplasm. It is found in the P-body. In terms of biological role, regulatory subunit of the poly(A)-nuclease (PAN) deadenylation complex, one of two cytoplasmic mRNA deadenylases involved in general and miRNA-mediated mRNA turnover. PAN specifically shortens poly(A) tails of RNA and the activity is stimulated by poly(A)-binding protein (PABP). PAN deadenylation is followed by rapid degradation of the shortened mRNA tails by the CCR4-NOT complex. Deadenylated mRNAs are then degraded by two alternative mechanisms, namely exosome-mediated 3'-5' exonucleolytic degradation, or deadenylation-dependent mRNA decaping and subsequent 5'-3' exonucleolytic degradation by XRN1. PAN3 acts as a positive regulator for PAN activity, recruiting the catalytic subunit PAN2 to mRNA via its interaction with RNA and PABP, and to miRNA targets via its interaction with GW182 family proteins. The chain is PAN2-PAN3 deadenylation complex subunit PAN3 from Drosophila melanogaster (Fruit fly).